We begin with the raw amino-acid sequence, 38 residues long: Photosystem II reaction center protein L (38 aa).

A helical transmembrane segment spans residues 17–37 (SLYWGLLLIFVLAVLFSSYFF).

The protein belongs to the PsbL family. PSII is composed of 1 copy each of membrane proteins PsbA, PsbB, PsbC, PsbD, PsbE, PsbF, PsbH, PsbI, PsbJ, PsbK, PsbL, PsbM, PsbT, PsbX, PsbY, PsbZ, Psb30/Ycf12, at least 3 peripheral proteins of the oxygen-evolving complex and a large number of cofactors. It forms dimeric complexes.

The protein resides in the plastid. It is found in the chloroplast thylakoid membrane. In terms of biological role, one of the components of the core complex of photosystem II (PSII). PSII is a light-driven water:plastoquinone oxidoreductase that uses light energy to abstract electrons from H(2)O, generating O(2) and a proton gradient subsequently used for ATP formation. It consists of a core antenna complex that captures photons, and an electron transfer chain that converts photonic excitation into a charge separation. This subunit is found at the monomer-monomer interface and is required for correct PSII assembly and/or dimerization. The sequence is that of Photosystem II reaction center protein L from Ephedra sinica (Chinese ephedra).